The chain runs to 111 residues: WAP four-disulfide core domain protein 12 (111 aa).

The N-terminal stretch at 1-23 (MGSSSFLVLMVSLALVTLVVVEG) is a signal peptide. Residues 27–74 (GIEKAGVCPADNVRCFKSNPPQCHTDQDCLGERKCCYLHCGFKCVIPV) enclose the WAP domain. 4 disulfides stabilise this stretch: Cys-34-Cys-62, Cys-41-Cys-66, Cys-49-Cys-61, and Cys-55-Cys-70. The interval 80 to 111 (GGNKDEDVSGPHPEPGWEAKSPGSSSTGCPQI) is disordered. The span at 101-111 (PGSSSTGCPQI) shows a compositional bias: polar residues.

Its subcellular location is the secreted. In terms of biological role, antibacterial protein. Putative acid-stable proteinase inhibitor. The polypeptide is WAP four-disulfide core domain protein 12 (WFDC12) (Colobus guereza (Mantled guereza)).